Consider the following 85-residue polypeptide: Beta-insect depressant toxin Lqh-dprIT3e (85 aa).

The N-terminal stretch at 1 to 21 is a signal peptide; that stretch reads MKLLLLLTISASMLIEGLVNA. An LCN-type CS-alpha/beta domain is found at 22–82; it reads DGYIRGGDGC…EWDYETDTCG (61 aa). 4 cysteine pairs are disulfide-bonded: C31-C81, C35-C56, C42-C63, and C46-C65. Residue G82 is modified to Glycine amide.

The protein belongs to the long (4 C-C) scorpion toxin superfamily. Sodium channel inhibitor family. Beta subfamily. As to expression, expressed by the venom gland.

Its subcellular location is the secreted. Depressant insect beta-toxins cause a transient contraction paralysis followed by a slow flaccid paralysis. They bind voltage-independently at site-4 of sodium channels (Nav) and block action potentials, primarily by depolarizing the axonal membrane and suppressing the sodium current. This depressant toxin is active only on insects. It is found in a relatively small amount in the venom. This chain is Beta-insect depressant toxin Lqh-dprIT3e, found in Leiurus hebraeus (Hebrew deathstalker scorpion).